The primary structure comprises 343 residues: Protein RecA (343 aa).

64–71 (GPESSGKT) contacts ATP.

The protein belongs to the RecA family.

It localises to the cytoplasm. Can catalyze the hydrolysis of ATP in the presence of single-stranded DNA, the ATP-dependent uptake of single-stranded DNA by duplex DNA, and the ATP-dependent hybridization of homologous single-stranded DNAs. It interacts with LexA causing its activation and leading to its autocatalytic cleavage. The sequence is that of Protein RecA from Bacillus mycoides (strain KBAB4) (Bacillus weihenstephanensis).